We begin with the raw amino-acid sequence, 288 residues long: 33 kDa chaperonin (288 aa).

Intrachain disulfides connect Cys-235-Cys-237 and Cys-268-Cys-271.

This sequence belongs to the HSP33 family. Under oxidizing conditions two disulfide bonds are formed involving the reactive cysteines. Under reducing conditions zinc is bound to the reactive cysteines and the protein is inactive.

The protein resides in the cytoplasm. Functionally, redox regulated molecular chaperone. Protects both thermally unfolding and oxidatively damaged proteins from irreversible aggregation. Plays an important role in the bacterial defense system toward oxidative stress. The protein is 33 kDa chaperonin of Streptococcus suis (strain 98HAH33).